The chain runs to 101 residues: uncharacterized protein (101 aa).

This is an uncharacterized protein from Shigella flexneri.